The primary structure comprises 122 residues: NADPH-dependent 7-cyano-7-deazaguanine reductase (122 aa).

Cys-34 acts as the Thioimide intermediate in catalysis. Residue Asp-41 is the Proton donor of the active site. Substrate-binding positions include Val-56 to Leu-58 and His-75 to Glu-76.

This sequence belongs to the GTP cyclohydrolase I family. QueF type 1 subfamily.

It localises to the cytoplasm. The enzyme catalyses 7-aminomethyl-7-carbaguanine + 2 NADP(+) = 7-cyano-7-deazaguanine + 2 NADPH + 3 H(+). It functions in the pathway tRNA modification; tRNA-queuosine biosynthesis. Its function is as follows. Catalyzes the NADPH-dependent reduction of 7-cyano-7-deazaguanine (preQ0) to 7-aminomethyl-7-deazaguanine (preQ1). The protein is NADPH-dependent 7-cyano-7-deazaguanine reductase of Anaeromyxobacter sp. (strain Fw109-5).